A 677-amino-acid chain; its full sequence is Sulfate transporter 2.1 (677 aa).

Over 1-118 (MKERDSESFE…NYKLTMFKND (118 aa)) the chain is Cytoplasmic. The tract at residues 23–54 (STHMIQMAMANSGSSAAAQAGQDQPDRSKWLL) is disordered. Low complexity predominate over residues 28-44 (QMAMANSGSSAAAQAGQ). A helical transmembrane segment spans residues 119-139 (LMAGLTLASLCIPQSIGYATL). Residues 140 to 141 (AK) are Extracellular-facing. A helical membrane pass occupies residues 142–162 (LDPQYGLYTSVVPPLIYALMG). Residues 163–166 (TSRE) are Cytoplasmic-facing. The chain crosses the membrane as a helical span at residues 167 to 187 (IAIGPVAVVSLLISSMLQKLI). Residues 188-198 (DPETDPLGYKK) are Extracellular-facing. A helical transmembrane segment spans residues 199-219 (LVLTTTFFAGIFQASFGLFRL). Residues 220 to 221 (GF) are Cytoplasmic-facing. The chain crosses the membrane as a helical span at residues 222-242 (LVDFLSHAAIVGFMGGAAIVI). Residues 243-278 (GLQQLKGLLGITNFTTNTDIVSVLRAVWRSCQQQWS) lie on the Extracellular side of the membrane. N255 carries an N-linked (GlcNAc...) asparagine glycan. A helical transmembrane segment spans residues 279–299 (PHTFILGCSFLSFILITRFIG). The Cytoplasmic segment spans residues 300–304 (KKYKK). Residues 305 to 325 (LFWLPAIAPLIAVVVSTLMVF) traverse the membrane as a helical segment. Topologically, residues 326–360 (LTKADEHGVKTVRHIKGGLNPMSIQDLDFNTPHLG) are extracellular. Residues 361-381 (QIAKIGLIIAIVALTEAIAVG) form a helical membrane-spanning segment. Over 382–397 (RSFAGIKGYRLDGNKE) the chain is Cytoplasmic. A helical membrane pass occupies residues 398–418 (MVAIGFMNVLGSFTSCYAATG). Topologically, residues 419 to 426 (SFSRTAVN) are extracellular. Residues 427-447 (FAAGCETAMSNIVMAVTVFVA) form a helical membrane-spanning segment. Topologically, residues 448–454 (LECLTRL) are cytoplasmic. The helical transmembrane segment at 455–475 (LYYTPIAILASIILSALPGLI) threads the bilayer. Residues 476-490 (NINEAIHIWKVDKFD) lie on the Extracellular side of the membrane. Residues 491-511 (FLALIGAFFGVLFASVEIGLL) form a helical membrane-spanning segment. The Cytoplasmic segment spans residues 512-677 (VAVVISFAKI…ALDACFGLKV (166 aa)). The STAS domain occupies 548 to 672 (YPMTVKTPGV…LTIGEALDAC (125 aa)).

This sequence belongs to the SLC26A/SulP transporter (TC 2.A.53) family. In terms of tissue distribution, expressed in root cap, central cylinder of roots and in vascular tissues of leaves.

Its subcellular location is the membrane. Low-affinity H(+)/sulfate cotransporter that may be involved in root-to-shoot translocation of sulfate. Plays a central role in the regulation of sulfate assimilation. This is Sulfate transporter 2.1 (SULTR2;1) from Arabidopsis thaliana (Mouse-ear cress).